Here is a 614-residue protein sequence, read N- to C-terminus: uncharacterized protein (614 aa).

Helical transmembrane passes span 494-516 (VAYW…GSTL) and 552-574 (LLIG…IVHA). The segment at 588 to 614 (AVRPRADKDIQTLTHRDEAEEDQEEDS) is disordered. Residues 591–605 (PRADKDIQTLTHRDE) show a composition bias toward basic and acidic residues.

It is found in the cell membrane. This is an uncharacterized protein from Treponema pallidum (strain Nichols).